The chain runs to 152 residues: UPF0756 membrane protein Daud_1310 (152 aa).

4 helical membrane passes run 14–34 (LVGVLAKSHLIAAAACILLFI), 51–71 (LELGLLILLLTIMVPLANGKI), 76–96 (IIYNLTSIPGLLAILGGALAT), and 112–132 (IIFGLIIGSIFGILFLGGMPV).

The protein belongs to the UPF0756 family.

It is found in the cell membrane. The polypeptide is UPF0756 membrane protein Daud_1310 (Desulforudis audaxviator (strain MP104C)).